A 250-amino-acid polypeptide reads, in one-letter code: Coproheme decarboxylase (250 aa).

Residues Arg131, 145–149, His172, and Gln185 contribute to the Fe-coproporphyrin III site; that span reads YPMNK. Residue Tyr145 is part of the active site.

This sequence belongs to the ChdC family. Type 1 subfamily. It depends on Fe-coproporphyrin III as a cofactor.

The enzyme catalyses Fe-coproporphyrin III + 2 H2O2 + 2 H(+) = heme b + 2 CO2 + 4 H2O. The catalysed reaction is Fe-coproporphyrin III + H2O2 + H(+) = harderoheme III + CO2 + 2 H2O. It carries out the reaction harderoheme III + H2O2 + H(+) = heme b + CO2 + 2 H2O. The protein operates within porphyrin-containing compound metabolism; protoheme biosynthesis. Involved in coproporphyrin-dependent heme b biosynthesis. Catalyzes the decarboxylation of Fe-coproporphyrin III (coproheme) to heme b (protoheme IX), the last step of the pathway. The reaction occurs in a stepwise manner with a three-propionate intermediate. The sequence is that of Coproheme decarboxylase from Staphylococcus aureus (strain Mu50 / ATCC 700699).